Reading from the N-terminus, the 410-residue chain is Lysosome-associated membrane glycoprotein 2 (410 aa).

An N-terminal signal peptide occupies residues 1–28; it reads MVCFRLFPVPGSGLVLVCLVLGAVRSYA. The first lumenal domain stretch occupies residues 29–192; the sequence is LELNLTDSEN…STNEFLCDKD (164 aa). The Lumenal portion of the chain corresponds to 29–375; that stretch reads LELNLTDSEN…QDCSADDDNF (347 aa). Residues asparagine 32 and asparagine 38 are each glycosylated (N-linked (GlcNAc...) (polylactosaminoglycan) asparagine). A disulfide bond links cysteine 41 and cysteine 79. N-linked (GlcNAc...) asparagine glycans are attached at residues asparagine 49, asparagine 58, asparagine 75, asparagine 101, asparagine 123, and asparagine 179. A disulfide bridge links cysteine 153 with cysteine 189. Residues 193–228 form a hinge region; it reads KTSTVAPTIHTTVPSPTTTPTPKEKPEAGTYSVNNG. Serine 195 is a glycosylation site (O-linked (GalNAc...) serine). O-linked (GalNAc...) threonine glycans are attached at residues threonine 196, threonine 200, threonine 203, and threonine 204. A compositionally biased stretch (low complexity) spans 199–213; it reads PTIHTTVPSPTTTPT. Positions 199-221 are disordered; sequence PTIHTTVPSPTTTPTPKEKPEAG. Serine 207 carries an O-linked (GalNAc...) serine; partial glycan. The O-linked (GalNAc...) threonine; partial glycan is linked to threonine 209. Threonine 210 and threonine 211 each carry an O-linked (GalNAc...) threonine glycan. O-linked (GalNAc...) threonine; partial glycosylation occurs at threonine 213. N-linked (GlcNAc...) asparagine glycosylation is found at asparagine 229, asparagine 242, asparagine 257, asparagine 275, and asparagine 300. The second lumenal domain stretch occupies residues 229 to 375; sequence NDTCLLATMG…QDCSADDDNF (147 aa). Cysteine 232 and cysteine 265 are disulfide-bonded. The N-linked (GlcNAc...) (polylactosaminoglycan) asparagine glycan is linked to asparagine 307. 2 N-linked (GlcNAc...) asparagine glycosylation sites follow: asparagine 317 and asparagine 356. Cysteine 331 and cysteine 368 are joined by a disulfide. A helical membrane pass occupies residues 376–399; sequence LVPIAVGAALAGVLILVLLAYFIG. Residues 400–410 are Cytoplasmic-facing; it reads LKHHHAGYEQF. An important for binding and subsequent lysosomal degradation of target proteins region spans residues 401–404; sequence KHHH.

The protein belongs to the LAMP family. In terms of assembly, monomer. Homodimer. Homotrimer. Forms large homooligomers. Interacts (via its cytoplasmic region) with HSPA8; HSPA8 mediates recruitment of proteins with a KFERQ motif to the surface of the lysosome for chaperone-mediated autophagy. Interacts with HSP90 in the lysosome lumen; this enhances LAMP2 stability. Interacts with MLLT11. Interacts with ABCB9. Interacts with FURIN. Interacts with CT55; this interaction may be important for LAMP2 protein stability. Interacts with TMEM175; inhibiting the proton channel activity of TMEM175. Forms a ternary complex with RAB7A and RUFY4 (via RUN domain); the interaction with RAB7A is mediated by RUFY4 (via RUN and coiled coil domains). (Microbial infection) Interacts with mumps virus protein F; this interaction promotes protein F cleavage by FURIN. Post-translationally, O- and N-glycosylated; some of the 16 N-linked glycans are polylactosaminoglycans. In terms of tissue distribution, isoform LAMP-2A is highly expressed in placenta, lung and liver, less in kidney and pancreas, low in brain and skeletal muscle. Isoform LAMP-2B is detected in spleen, thymus, prostate, testis, small intestine, colon, skeletal muscle, brain, placenta, lung, kidney, ovary and pancreas and liver. Isoform LAMP-2C is detected in small intestine, colon, heart, brain, skeletal muscle, and at lower levels in kidney and placenta.

It is found in the lysosome membrane. It localises to the endosome membrane. Its subcellular location is the cell membrane. The protein resides in the cytoplasmic vesicle. The protein localises to the autophagosome membrane. In terms of biological role, lysosomal membrane glycoprotein which plays an important role in lysosome biogenesis, lysosomal pH regulation and autophagy. Acts as an important regulator of lysosomal lumen pH regulation by acting as a direct inhibitor of the proton channel TMEM175, facilitating lysosomal acidification for optimal hydrolase activity. Plays an important role in chaperone-mediated autophagy, a process that mediates lysosomal degradation of proteins in response to various stresses and as part of the normal turnover of proteins with a long biological half-live. Functions by binding target proteins, such as GAPDH, NLRP3 and MLLT11, and targeting them for lysosomal degradation. In the chaperone-mediated autophagy, acts downstream of chaperones, such as HSPA8/HSC70, which recognize and bind substrate proteins and mediate their recruitment to lysosomes, where target proteins bind LAMP2. Plays a role in lysosomal protein degradation in response to starvation. Required for the fusion of autophagosomes with lysosomes during autophagy. Cells that lack LAMP2 express normal levels of VAMP8, but fail to accumulate STX17 on autophagosomes, which is the most likely explanation for the lack of fusion between autophagosomes and lysosomes. Required for normal degradation of the contents of autophagosomes. Required for efficient MHC class II-mediated presentation of exogenous antigens via its function in lysosomal protein degradation; antigenic peptides generated by proteases in the endosomal/lysosomal compartment are captured by nascent MHC II subunits. Is not required for efficient MHC class II-mediated presentation of endogenous antigens. Its function is as follows. Modulates chaperone-mediated autophagy. Decreases presentation of endogenous antigens by MHCII. Does not play a role in the presentation of exogenous and membrane-derived antigens by MHCII. (Microbial infection) Supports the FURIN-mediated cleavage of mumps virus fusion protein F by interacting with both FURIN and the unprocessed form but not the processed form of the viral protein F. In Homo sapiens (Human), this protein is Lysosome-associated membrane glycoprotein 2 (LAMP2).